The primary structure comprises 421 residues: Core protease I7 homolog (421 aa).

Active-site residues include histidine 242, aspartate 249, and cysteine 329.

It belongs to the peptidase C57 family.

It localises to the virion. Functionally, late protein responsible for processing most or all of the viral core and membrane proteins known to undergo morphogenesis-associated proteolysis. These proteolytic events are involved in the transformation of immature virions (IV) into mature virions (MV). This Fowlpox virus (strain NVSL) (FPV) protein is Core protease I7 homolog.